A 122-amino-acid polypeptide reads, in one-letter code: UPF0102 protein CPF_1959 (122 aa).

It belongs to the UPF0102 family.

This is UPF0102 protein CPF_1959 from Clostridium perfringens (strain ATCC 13124 / DSM 756 / JCM 1290 / NCIMB 6125 / NCTC 8237 / Type A).